Reading from the N-terminus, the 225-residue chain is NAD(P)H-quinone oxidoreductase subunit K, chloroplastic (225 aa).

[4Fe-4S] cluster is bound by residues Cys43, Cys44, Cys108, and Cys139.

This sequence belongs to the complex I 20 kDa subunit family. NDH is composed of at least 16 different subunits, 5 of which are encoded in the nucleus. [4Fe-4S] cluster serves as cofactor.

The protein localises to the plastid. It localises to the chloroplast thylakoid membrane. It catalyses the reaction a plastoquinone + NADH + (n+1) H(+)(in) = a plastoquinol + NAD(+) + n H(+)(out). It carries out the reaction a plastoquinone + NADPH + (n+1) H(+)(in) = a plastoquinol + NADP(+) + n H(+)(out). Functionally, NDH shuttles electrons from NAD(P)H:plastoquinone, via FMN and iron-sulfur (Fe-S) centers, to quinones in the photosynthetic chain and possibly in a chloroplast respiratory chain. The immediate electron acceptor for the enzyme in this species is believed to be plastoquinone. Couples the redox reaction to proton translocation, and thus conserves the redox energy in a proton gradient. The sequence is that of NAD(P)H-quinone oxidoreductase subunit K, chloroplastic from Manihot esculenta (Cassava).